A 693-amino-acid polypeptide reads, in one-letter code: Polyribonucleotide nucleotidyltransferase (693 aa).

Asp485 and Asp491 together coordinate Mg(2+). One can recognise a KH domain in the interval 552 to 611 (PRIMVLEINPSKIGDLIGPSGKNIKKIIEETHTTINIKPEGLVYISAPDQESAEKAAQMV). Residues 621 to 691 (GDIFLGKVIR…SSGRISLTRK (71 aa)) enclose the S1 motif domain.

It belongs to the polyribonucleotide nucleotidyltransferase family. Mg(2+) is required as a cofactor.

Its subcellular location is the cytoplasm. The enzyme catalyses RNA(n+1) + phosphate = RNA(n) + a ribonucleoside 5'-diphosphate. In terms of biological role, involved in mRNA degradation. Catalyzes the phosphorolysis of single-stranded polyribonucleotides processively in the 3'- to 5'-direction. In Dictyoglomus thermophilum (strain ATCC 35947 / DSM 3960 / H-6-12), this protein is Polyribonucleotide nucleotidyltransferase.